The chain runs to 331 residues: Anthranilate phosphoribosyltransferase (331 aa).

5-phospho-alpha-D-ribose 1-diphosphate is bound by residues Gly-81, 84–85, Ser-89, 91–94, 109–117, and Ser-121; these read GD, NCST, and KHGNRAVSS. Gly-81 is an anthranilate binding site. A Mg(2+)-binding site is contributed by Ser-93. An anthranilate-binding site is contributed by Asn-112. Position 167 (Arg-167) interacts with anthranilate. The Mg(2+) site is built by Asp-226 and Glu-227.

It belongs to the anthranilate phosphoribosyltransferase family. As to quaternary structure, homodimer. The cofactor is Mg(2+).

The enzyme catalyses N-(5-phospho-beta-D-ribosyl)anthranilate + diphosphate = 5-phospho-alpha-D-ribose 1-diphosphate + anthranilate. It functions in the pathway amino-acid biosynthesis; L-tryptophan biosynthesis; L-tryptophan from chorismate: step 2/5. Catalyzes the transfer of the phosphoribosyl group of 5-phosphorylribose-1-pyrophosphate (PRPP) to anthranilate to yield N-(5'-phosphoribosyl)-anthranilate (PRA). This Oleidesulfovibrio alaskensis (strain ATCC BAA-1058 / DSM 17464 / G20) (Desulfovibrio alaskensis) protein is Anthranilate phosphoribosyltransferase.